We begin with the raw amino-acid sequence, 226 residues long: NADH-quinone oxidoreductase subunit B 2 (226 aa).

[4Fe-4S] cluster-binding residues include Cys37, Cys38, Cys103, and Cys132.

Belongs to the complex I 20 kDa subunit family. In terms of assembly, NDH-1 is composed of 14 different subunits. Subunits NuoB, C, D, E, F, and G constitute the peripheral sector of the complex. It depends on [4Fe-4S] cluster as a cofactor.

The protein resides in the cell membrane. The catalysed reaction is a quinone + NADH + 5 H(+)(in) = a quinol + NAD(+) + 4 H(+)(out). NDH-1 shuttles electrons from NADH, via FMN and iron-sulfur (Fe-S) centers, to quinones in the respiratory chain. The immediate electron acceptor for the enzyme in this species is believed to be a menaquinone. Couples the redox reaction to proton translocation (for every two electrons transferred, four hydrogen ions are translocated across the cytoplasmic membrane), and thus conserves the redox energy in a proton gradient. The protein is NADH-quinone oxidoreductase subunit B 2 of Salinispora arenicola (strain CNS-205).